A 571-amino-acid chain; its full sequence is MADEAKAKGNAAFSSGDFNSAVNHFTDAINLTPTNHVLFSNRSAAHASLNHYDEALSDAKKTVELKPDWGKGYSRLGAAHLGLNQFDEAVEAYSKGLEIDPSNEGLKSGLADAKASASRSRASAPNPFGDAFQGPEMWSKLTADPSTRGLLKQPDFVNMMKEIQRNPSNLNLYLQDQRVMQALGVLLNIQIRTQQAGDDMEIGEEEMAVPSRKEPEVEKKRKPEPEPEPEPEFGEEKQKKLKAQKEKELGNAAYKKKDFETAIQHYSTAMEIDDEDISYITNRAAVHLEMGKYDECIKDCDKAVERGRELRSDYKMVAKALTRKGTALGKMAKVSKDYEPVIQTYQKALTEHRNPETLKRLNEAERAKKELEQQEYYDPNIGDEEREKGNDFFKEQKYPDAVRHYTEAIKRNPKDPRAYSNRAACYTKLGAMPEGLKDAEKCIELDPTFLKGYSRKGAVQFFMKEYDNAMETYQKGLEHDPNNQELLDGVKRCVQQINKANRGDLTPEELKERQAKGMQDPEIQNILTDPVMRQVLSDLQENPAAAQKHMQNPMIMNKIQKLISSGIVQMK.

TPR repeat units follow at residues 2 to 35 (ADEAKAKGNAAFSSGDFNSAVNHFTDAINLTPTN), 37 to 69 (VLFSNRSAAHASLNHYDEALSDAKKTVELKPDW), and 70 to 103 (GKGYSRLGAAHLGLNQFDEAVEAYSKGLEIDPSN). The segment at 117-137 (ASRSRASAPNPFGDAFQGPEM) is disordered. Positions 134 to 173 (GPEMWSKLTADPSTRGLLKQPDFVNMMKEIQRNPSNLNLY) constitute an STI1 1 domain. At Ser-168 the chain carries Phosphoserine. Positions 198–207 (DDMEIGEEEM) are enriched in acidic residues. Residues 198–245 (DDMEIGEEEMAVPSRKEPEVEKKRKPEPEPEPEPEFGEEKQKKLKAQK) are disordered. Basic and acidic residues-rich tracts occupy residues 211-225 (SRKEPEVEKKRKPEP) and 234-245 (GEEKQKKLKAQK). The Bipartite nuclear localization signal signature appears at 240-257 (KLKAQKEKELGNAAYKKK). TPR repeat units follow at residues 243 to 276 (AQKEKELGNAAYKKKDFETAIQHYSTAMEIDDED), 278 to 310 (SYITNRAAVHLEMGKYDECIKDCDKAVERGREL), 322 to 355 (TRKGTALGKMAKVSKDYEPVIQTYQKALTEHRNP), 382 to 415 (GDEEREKGNDFFKEQKYPDAVRHYTEAIKRNPKD), 417 to 449 (RAYSNRAACYTKLGAMPEGLKDAEKCIELDPTF), and 450 to 483 (LKGYSRKGAVQFFMKEYDNAMETYQKGLEHDPNN). The STI1 2 domain maps to 520 to 559 (DPEIQNILTDPVMRQVLSDLQENPAAAQKHMQNPMIMNKI).

In terms of assembly, co-chaperone that forms a complex with HSP70 and HSP90 and preproteins (e.g. chloroplast preproteins). In terms of processing, phosphorylated. Acetylated.

It localises to the cytoplasm. It is found in the nucleus. Functionally, mediates the association of the molecular chaperones HSP70 and HSP90. Mediates nuclear encoded chloroplast preproteins binding to HSP90 prior to chloroplastic sorting. This Arabidopsis thaliana (Mouse-ear cress) protein is Hsp70-Hsp90 organizing protein 2 (HOP2).